A 397-amino-acid chain; its full sequence is Pectate lyase (397 aa).

The N-terminal stretch at 1–25 is a signal peptide; it reads MDVYRIRISVFFLLVLLTFAALTTA. Asn134 is a glycosylation site (N-linked (GlcNAc...) asparagine). Positions 191, 216, and 220 each coordinate Ca(2+). Asn227 is a glycosylation site (N-linked (GlcNAc...) asparagine). The active site involves Arg272.

It belongs to the polysaccharide lyase 1 family. Requires Ca(2+) as cofactor.

The catalysed reaction is Eliminative cleavage of (1-&gt;4)-alpha-D-galacturonan to give oligosaccharides with 4-deoxy-alpha-D-galact-4-enuronosyl groups at their non-reducing ends.. It functions in the pathway glycan metabolism; pectin degradation; 2-dehydro-3-deoxy-D-gluconate from pectin: step 2/5. The polypeptide is Pectate lyase (Nicotiana tabacum (Common tobacco)).